The following is a 152-amino-acid chain: Probable methionine-R-sulfoxide reductase B (152 aa).

Positions 27–151 constitute a MsrB domain; the sequence is QTEWKSVLPN…NSVCMAFEKK (125 aa). Positions 66, 69, 116, and 119 each coordinate Zn(2+). The active-site Nucleophile is the Cys140.

The protein belongs to the MsrB Met sulfoxide reductase family. The cofactor is Zn(2+).

It carries out the reaction L-methionyl-[protein] + [thioredoxin]-disulfide + H2O = L-methionyl-(R)-S-oxide-[protein] + [thioredoxin]-dithiol. Its function is as follows. Methionine-sulfoxide reductase that specifically reduces methionine (R)-sulfoxide back to methionine. While in many cases, methionine oxidation is the result of random oxidation following oxidative stress, methionine oxidation is also a post-translational modification that takes place on specific residue. This Caenorhabditis elegans protein is Probable methionine-R-sulfoxide reductase B.